Reading from the N-terminus, the 566-residue chain is Proline--tRNA ligase (566 aa).

Belongs to the class-II aminoacyl-tRNA synthetase family. ProS type 1 subfamily. In terms of assembly, homodimer.

The protein localises to the cytoplasm. The enzyme catalyses tRNA(Pro) + L-proline + ATP = L-prolyl-tRNA(Pro) + AMP + diphosphate. Its function is as follows. Catalyzes the attachment of proline to tRNA(Pro) in a two-step reaction: proline is first activated by ATP to form Pro-AMP and then transferred to the acceptor end of tRNA(Pro). As ProRS can inadvertently accommodate and process non-cognate amino acids such as alanine and cysteine, to avoid such errors it has two additional distinct editing activities against alanine. One activity is designated as 'pretransfer' editing and involves the tRNA(Pro)-independent hydrolysis of activated Ala-AMP. The other activity is designated 'posttransfer' editing and involves deacylation of mischarged Ala-tRNA(Pro). The misacylated Cys-tRNA(Pro) is not edited by ProRS. This chain is Proline--tRNA ligase, found in Shouchella clausii (strain KSM-K16) (Alkalihalobacillus clausii).